We begin with the raw amino-acid sequence, 97 residues long: Aspartyl/glutamyl-tRNA(Asn/Gln) amidotransferase subunit C (97 aa).

Belongs to the GatC family. In terms of assembly, heterotrimer of A, B and C subunits.

It catalyses the reaction L-glutamyl-tRNA(Gln) + L-glutamine + ATP + H2O = L-glutaminyl-tRNA(Gln) + L-glutamate + ADP + phosphate + H(+). The catalysed reaction is L-aspartyl-tRNA(Asn) + L-glutamine + ATP + H2O = L-asparaginyl-tRNA(Asn) + L-glutamate + ADP + phosphate + 2 H(+). Allows the formation of correctly charged Asn-tRNA(Asn) or Gln-tRNA(Gln) through the transamidation of misacylated Asp-tRNA(Asn) or Glu-tRNA(Gln) in organisms which lack either or both of asparaginyl-tRNA or glutaminyl-tRNA synthetases. The reaction takes place in the presence of glutamine and ATP through an activated phospho-Asp-tRNA(Asn) or phospho-Glu-tRNA(Gln). The chain is Aspartyl/glutamyl-tRNA(Asn/Gln) amidotransferase subunit C from Synechococcus sp. (strain CC9605).